The sequence spans 149 residues: Protein cornichon homolog 2 (149 aa).

A run of 3 helical transmembrane segments spans residues 3–23 (IELI…GLTA), 59–79 (ALCA…MAPV), and 117–137 (YFSL…TLFI).

The protein belongs to the cornichon family.

The protein resides in the endoplasmic reticulum membrane. Its subcellular location is the golgi apparatus membrane. Acts as a cargo receptor necessary for the transportation of secretory proteins from the endoplasmic reticulum (ER) in COPII-coated vesicles targeted to the Golgi apparatus. This is Protein cornichon homolog 2 from Oryza sativa subsp. japonica (Rice).